The following is a 253-amino-acid chain: Small ribosomal subunit protein uS2 (253 aa).

Ser2 carries the post-translational modification N-acetylserine. A disordered region spans residues 212-253 (QQAAEEAAAGEEDDEAKEEVAAEEQTEAADWAEGQSEEVASW). Positions 219 to 238 (AAGEEDDEAKEEVAAEEQTE) are enriched in acidic residues.

It belongs to the universal ribosomal protein uS2 family. Component of the small ribosomal subunit. Mature ribosomes consist of a small (40S) and a large (60S) subunit. The 40S subunit contains about 33 different proteins and 1 molecule of RNA (18S). The 60S subunit contains about 49 different proteins and 3 molecules of RNA (25S, 5.8S and 5S). Interacts with RPS21.

The protein resides in the cytoplasm. Functionally, required for the assembly and/or stability of the 40S ribosomal subunit. Required for the processing of the 20S rRNA-precursor to mature 18S rRNA in a late step of the maturation of 40S ribosomal subunits. The chain is Small ribosomal subunit protein uS2 from Eremothecium gossypii (strain ATCC 10895 / CBS 109.51 / FGSC 9923 / NRRL Y-1056) (Yeast).